A 238-amino-acid chain; its full sequence is E3 ubiquitin-protein ligase ZNRF2 (238 aa).

The tract at residues 1–137 is disordered; the sequence is MGAKQSGPAA…AGGGPGGPRL (137 aa). A lipid anchor (N-myristoyl glycine) is attached at Gly2. Phosphoserine occurs at positions 20, 24, 75, 82, 107, 110, 141, 147, and 189. Over residues 35–77 the composition is skewed to low complexity; that stretch reads GARAARFAAPVSGAQQPSASAGAAAAAAAAASAPAAPRSRSLG. The segment at 195 to 236 adopts an RING-type; atypical zinc-finger fold; that stretch reads CAICLEELQQGDTIARLPCLCIYHKGCIDEWFEVNRSCPEHP.

As to quaternary structure, interacts with UBE2N. Interacts with ZNRF1. Interacts (when phosphorylated) with YWHAE. Post-translationally, phosphorylated; leading to binding to YWHAE. Phosphorylated by MTOR at Ser-147 and dephosphorylated by PP6C. Ser-147 phosphorylation stimulates vesicle-to-cytosol translocation. In terms of tissue distribution, expressed primarily in the nervous system. Expression is more intense in the granular cell layer of hippocampus, Purkinje cell layer of the cerebellum and the granular cell layer of the olfactory bulb. Detected in sensory neurons but not expressed in sympatic or enteric neurons. Expressed in testis, adipose tissue, columnar epithelial cells of the gut.

The protein localises to the endosome membrane. The protein resides in the lysosome membrane. It localises to the presynaptic cell membrane. Its subcellular location is the cytoplasm. It catalyses the reaction S-ubiquitinyl-[E2 ubiquitin-conjugating enzyme]-L-cysteine + [acceptor protein]-L-lysine = [E2 ubiquitin-conjugating enzyme]-L-cysteine + N(6)-ubiquitinyl-[acceptor protein]-L-lysine.. It functions in the pathway protein modification; protein ubiquitination. In terms of biological role, E3 ubiquitin-protein ligase that plays a role in the establishment and maintenance of neuronal transmission and plasticity. Ubiquitinates the Na(+)/K(+) ATPase alpha-1 subunit/ATP1A1 and thereby influences its endocytosis and/or degradation. Also acts as a positive regulator of mTORC1 activation by amino acids, which functions upstream of the V-ATPase and of Rag-GTPases. In turn, phosphorylation by mTOR leads to its inhibition via targeting to the cytosol allowing a self-regulating feedback mechanism. This Mus musculus (Mouse) protein is E3 ubiquitin-protein ligase ZNRF2 (Znrf2).